The following is a 341-amino-acid chain: Myb-related transcription factor, partner of profilin (341 aa).

The 73-residue stretch at 8-80 folds into the Myb-like domain; that stretch reads VTRLRKPRFS…EVQKRWNDFK (73 aa). 3 disordered regions span residues 84–103, 180–210, and 309–341; these read KEKL…EEAM, LPHL…PSGV, and AEPP…WKNL. The segment covering 184 to 200 has biased composition (pro residues); that stretch reads TPSPDPSECPSPPPPGS. The span at 321 to 341 shows a compositional bias: basic residues; sequence NKRKRFGYLSQRKRRGRWKNL.

It localises to the nucleus. In terms of biological role, transcriptional repressor; DNA-binding protein that specifically recognizes the core sequence 5'-YAAC[GT]G-3'. In Xenopus laevis (African clawed frog), this protein is Myb-related transcription factor, partner of profilin (mypop).